We begin with the raw amino-acid sequence, 860 residues long: Leucine--tRNA ligase (860 aa).

Residues proline 42–histidine 52 carry the 'HIGH' region motif. A 'KMSKS' region motif is present at residues lysine 619–serine 623. Lysine 622 is an ATP binding site.

It belongs to the class-I aminoacyl-tRNA synthetase family.

Its subcellular location is the cytoplasm. It catalyses the reaction tRNA(Leu) + L-leucine + ATP = L-leucyl-tRNA(Leu) + AMP + diphosphate. The sequence is that of Leucine--tRNA ligase from Salmonella enteritidis PT4 (strain P125109).